The primary structure comprises 449 residues: Glucose-6-phosphate isomerase (449 aa).

Glutamate 291 functions as the Proton donor in the catalytic mechanism. Catalysis depends on residues histidine 312 and lysine 426.

This sequence belongs to the GPI family.

The protein localises to the cytoplasm. It carries out the reaction alpha-D-glucose 6-phosphate = beta-D-fructose 6-phosphate. The protein operates within carbohydrate biosynthesis; gluconeogenesis. It participates in carbohydrate degradation; glycolysis; D-glyceraldehyde 3-phosphate and glycerone phosphate from D-glucose: step 2/4. Functionally, catalyzes the reversible isomerization of glucose-6-phosphate to fructose-6-phosphate. The polypeptide is Glucose-6-phosphate isomerase (Streptococcus thermophilus (strain CNRZ 1066)).